Here is a 389-residue protein sequence, read N- to C-terminus: Chorismate synthase (389 aa).

NADP(+) contacts are provided by R39 and R45. FMN is bound by residues 130 to 132, 251 to 252, G296, 311 to 315, and R338; these read RSS, NA, and KPIPT.

It belongs to the chorismate synthase family. Homotetramer. The cofactor is FMNH2.

It catalyses the reaction 5-O-(1-carboxyvinyl)-3-phosphoshikimate = chorismate + phosphate. It functions in the pathway metabolic intermediate biosynthesis; chorismate biosynthesis; chorismate from D-erythrose 4-phosphate and phosphoenolpyruvate: step 7/7. In terms of biological role, catalyzes the anti-1,4-elimination of the C-3 phosphate and the C-6 proR hydrogen from 5-enolpyruvylshikimate-3-phosphate (EPSP) to yield chorismate, which is the branch point compound that serves as the starting substrate for the three terminal pathways of aromatic amino acid biosynthesis. This reaction introduces a second double bond into the aromatic ring system. The chain is Chorismate synthase from Oceanobacillus iheyensis (strain DSM 14371 / CIP 107618 / JCM 11309 / KCTC 3954 / HTE831).